We begin with the raw amino-acid sequence, 626 residues long: Mini-chromosome maintenance complex-binding protein (626 aa).

Disordered regions lie at residues 152-216 (STSY…LDLN) and 265-287 (PSSLLLNPSESMESPEEQRAHDP). Over residues 177–196 (KQREPHTEPHGNGDSKRQET) the composition is skewed to basic and acidic residues. Over residues 197-210 (EAPSSQTTAPSDCS) the composition is skewed to polar residues.

It belongs to the MCMBP family. As to quaternary structure, interacts with the mcm complex: associates with the mcm3-7 complex which lacks mcm2, while it does not interact with the mcm complex when mcm2 is present (mcm2-7 complex).

It is found in the nucleus. Associated component of the mcm complex that acts as a regulator of DNA replication. Binds to the MCM complex during late S phase and promotes the disassembly of the mcm complex from chromatin, thereby acting as a key regulator of pre-replication complex (pre-RC) unloading from replicated DNA. Can dissociate the mcm complex without addition of ATP; probably acts by destabilizing interactions of each individual subunits of the mcm complex. Required for sister chromatid cohesion. In Salmo salar (Atlantic salmon), this protein is Mini-chromosome maintenance complex-binding protein (mcmbp).